Reading from the N-terminus, the 117-residue chain is DCPSDWSSYEGHCYRVFQQEMTWDDAEKFCTQQHTGGHLVSFRSSEEVDFLVSILKFDLFWMGWRDIWNERRLQWSDGTKVNYKAWSAEPECIVCRATDNQWLSTSCSKTHNVVCKF.

3 disulfide bridges follow: cysteine 2-cysteine 13, cysteine 30-cysteine 115, and cysteine 92-cysteine 107. In terms of domain architecture, C-type lectin spans 9–116 (YEGHCYRVFQ…CSKTHNVVCK (108 aa)).

Belongs to the snaclec family. As to quaternary structure, heterodimer of subunits alpha and beta; disulfide-linked. In terms of tissue distribution, expressed by the venom gland.

It is found in the secreted. In terms of biological role, binds to the subunit GPIbalpha (GP1BA) of the platelet GPIb/V/IX receptor system. It inhibits ristocetin- and vWF-induced platelet aggregation in platelet-rich plasma by inhibiting the binding of vWF to GPIbalpha. This is Snaclec CHH-B subunit beta from Crotalus horridus (Timber rattlesnake).